The chain runs to 176 residues: Translation initiation factor IF-3 (176 aa).

It belongs to the IF-3 family. As to quaternary structure, monomer.

The protein resides in the cytoplasm. In terms of biological role, IF-3 binds to the 30S ribosomal subunit and shifts the equilibrium between 70S ribosomes and their 50S and 30S subunits in favor of the free subunits, thus enhancing the availability of 30S subunits on which protein synthesis initiation begins. In Streptococcus agalactiae serotype Ia (strain ATCC 27591 / A909 / CDC SS700), this protein is Translation initiation factor IF-3.